Here is a 1281-residue protein sequence, read N- to C-terminus: SCL-interrupting locus protein homolog (1281 aa).

6 stretches are compositionally biased toward polar residues: residues 390 to 401 (VFKQSPLPNKLS), 461 to 475 (RNNSPFSSTPQNVNN), 528 to 560 (HLQSSNQIRRNSTSTSSAFSTPRSGCSPDSTVH), 567 to 592 (EQEQNINGSAQPQGTTPLMRSGSYSR), 770 to 790 (SKTTIPNNSKQKQVESVSTEQ), and 891 to 913 (QDINNSKSLSNQTDHTESPNTAE). Disordered regions lie at residues 390 to 431 (VFKQ…QVSR), 450 to 592 (KSAS…SYSR), 765 to 790 (AESEPSKTTIPNNSKQKQVESVSTEQ), and 879 to 915 (RDDASYPLPDVQQDINNSKSLSNQTDHTESPNTAEID).

It is found in the cytoplasm. The protein localises to the cytosol. Its subcellular location is the cytoskeleton. It localises to the microtubule organizing center. The protein resides in the centrosome. It is found in the centriole. Its function is as follows. Plays an essential role in early embryonic development. Plays an important role in the regulation of centriole duplication. In Xenopus laevis (African clawed frog), this protein is SCL-interrupting locus protein homolog (stil).